We begin with the raw amino-acid sequence, 873 residues long: Leucine--tRNA ligase (873 aa).

A 'HIGH' region motif is present at residues 42-52 (PYPSGKLHMGH). Residues 624–643 (PVEIGGTEKMSKSKNNGVDP) are disordered. Residues 632–636 (KMSKS) carry the 'KMSKS' region motif. Residue lysine 635 participates in ATP binding.

The protein belongs to the class-I aminoacyl-tRNA synthetase family.

The protein resides in the cytoplasm. The catalysed reaction is tRNA(Leu) + L-leucine + ATP = L-leucyl-tRNA(Leu) + AMP + diphosphate. This chain is Leucine--tRNA ligase, found in Pseudomonas aeruginosa (strain LESB58).